We begin with the raw amino-acid sequence, 149 residues long: MASSDIQVKELEKRASGQAFELILSPRSKESVPEFPLSPPKKKDLSLEEIQKKLEAAEERRKSHEAEVLKQLAEKREHEKEVLQKAIEENNNFSKMAEEKLTHKMEANKENREAQMAAKLERLREKDKHIEEVRKNKESKDPADETEAD.

Ala-2 carries the post-translational modification N-acetylalanine. Ser-4 carries the phosphoserine modification. The region spanning 4–145 (SDIQVKELEK…NKESKDPADE (142 aa)) is the SLD domain. N6-acetyllysine is present on Lys-9. Ser-16 bears the Phosphoserine mark. The residue at position 25 (Ser-25) is a Phosphoserine; by CDK1, MAPK1 and MAPK3. Lys-29 carries the post-translational modification N6-methyllysine. Residue Ser-31 is modified to Phosphoserine. Position 38 is a phosphoserine; by CDK1, MAPK1 and MAPK3 (Ser-38). The stretch at 41–140 (KKKDLSLEEI…EEVRKNKESK (100 aa)) forms a coiled coil. Ser-63 bears the Phosphoserine; by PKA mark. Lys-100 and Lys-119 each carry N6-acetyllysine. The span at 121–143 (ERLREKDKHIEEVRKNKESKDPA) shows a compositional bias: basic and acidic residues. The disordered stretch occupies residues 121–149 (ERLREKDKHIEEVRKNKESKDPADETEAD).

It belongs to the stathmin family. Binds to two alpha/beta-tubulin heterodimers. Interacts with KIST. Post-translationally, many different phosphorylated forms are observed depending on specific combinations among the sites which can be phosphorylated. MAPK is responsible for the phosphorylation of stathmin in response to NGF. Phosphorylation at Ser-16 seems to be required for neuron polarization.

The protein resides in the cytoplasm. The protein localises to the cytoskeleton. Its function is as follows. Involved in the regulation of the microtubule (MT) filament system by destabilizing microtubules. Prevents assembly and promotes disassembly of microtubules. Its phosphorylation at Ser-16 may be required for axon formation during neurogenesis. Involved in the control of the learned and innate fear. The protein is Stathmin (STMN1) of Bos taurus (Bovine).